Reading from the N-terminus, the 345-residue chain is Ferrochelatase (345 aa).

Fe cation-binding residues include His-215 and Glu-296.

The protein belongs to the ferrochelatase family.

The protein localises to the cytoplasm. It carries out the reaction heme b + 2 H(+) = protoporphyrin IX + Fe(2+). Its pathway is porphyrin-containing compound metabolism; protoheme biosynthesis; protoheme from protoporphyrin-IX: step 1/1. Catalyzes the ferrous insertion into protoporphyrin IX. Essential for normal nodule development. This is Ferrochelatase from Bradyrhizobium diazoefficiens (strain JCM 10833 / BCRC 13528 / IAM 13628 / NBRC 14792 / USDA 110).